Consider the following 280-residue polypeptide: NAD-capped RNA hydrolase NudC (280 aa).

Substrate is bound at residue Arg-83. The Zn(2+) site is built by Cys-113, Cys-116, Cys-131, and Cys-134. Residue Tyr-139 coordinates substrate. One can recognise a Nudix hydrolase domain in the interval 140-268 (PRVAPAIIVL…ASRRLLDDAL (129 aa)). Residues Ala-177, Glu-193, and Glu-197 each coordinate a divalent metal cation. The short motif at 178-199 (GFVEPSETLEAAVHREVGEEVG) is the Nudix box element. A substrate-binding site is contributed by 211-218 (QPWPFPHS). Glu-238 lines the a divalent metal cation pocket.

The protein belongs to the Nudix hydrolase family. NudC subfamily. Homodimer. Mg(2+) is required as a cofactor. Requires Mn(2+) as cofactor. Zn(2+) serves as cofactor.

The catalysed reaction is a 5'-end NAD(+)-phospho-ribonucleoside in mRNA + H2O = a 5'-end phospho-adenosine-phospho-ribonucleoside in mRNA + beta-nicotinamide D-ribonucleotide + 2 H(+). It catalyses the reaction NAD(+) + H2O = beta-nicotinamide D-ribonucleotide + AMP + 2 H(+). It carries out the reaction NADH + H2O = reduced beta-nicotinamide D-ribonucleotide + AMP + 2 H(+). MRNA decapping enzyme that specifically removes the nicotinamide adenine dinucleotide (NAD) cap from a subset of mRNAs by hydrolyzing the diphosphate linkage to produce nicotinamide mononucleotide (NMN) and 5' monophosphate mRNA. The NAD-cap is present at the 5'-end of some mRNAs and stabilizes RNA against 5'-processing. Has preference for mRNAs with a 5'-end purine. Catalyzes the hydrolysis of a broad range of dinucleotide pyrophosphates. This Deinococcus radiodurans (strain ATCC 13939 / DSM 20539 / JCM 16871 / CCUG 27074 / LMG 4051 / NBRC 15346 / NCIMB 9279 / VKM B-1422 / R1) protein is NAD-capped RNA hydrolase NudC.